The following is a 227-amino-acid chain: uncharacterized protein (227 aa).

Residue 17–24 participates in ATP binding; that stretch reads GKTGCGKT.

This is an uncharacterized protein from Methanocaldococcus jannaschii (strain ATCC 43067 / DSM 2661 / JAL-1 / JCM 10045 / NBRC 100440) (Methanococcus jannaschii).